The sequence spans 279 residues: NADPH-dependent 7-cyano-7-deazaguanine reductase (279 aa).

86 to 88 (VES) lines the substrate pocket. 88-89 (SK) serves as a coordination point for NADPH. The active-site Thioimide intermediate is the Cys-187. Asp-194 serves as the catalytic Proton donor. 226-227 (HE) contacts substrate. 255 to 256 (RG) is a binding site for NADPH.

The protein belongs to the GTP cyclohydrolase I family. QueF type 2 subfamily. Homodimer.

The protein localises to the cytoplasm. It carries out the reaction 7-aminomethyl-7-carbaguanine + 2 NADP(+) = 7-cyano-7-deazaguanine + 2 NADPH + 3 H(+). It participates in tRNA modification; tRNA-queuosine biosynthesis. Functionally, catalyzes the NADPH-dependent reduction of 7-cyano-7-deazaguanine (preQ0) to 7-aminomethyl-7-deazaguanine (preQ1). This chain is NADPH-dependent 7-cyano-7-deazaguanine reductase, found in Actinobacillus succinogenes (strain ATCC 55618 / DSM 22257 / CCUG 43843 / 130Z).